A 297-amino-acid polypeptide reads, in one-letter code: Probable porphobilinogen deaminase (297 aa).

Residue Cys-233 is modified to S-(dipyrrolylmethanemethyl)cysteine.

It belongs to the HMBS family. Dipyrromethane is required as a cofactor.

The enzyme catalyses 4 porphobilinogen + H2O = hydroxymethylbilane + 4 NH4(+). Its pathway is porphyrin-containing compound metabolism; protoporphyrin-IX biosynthesis; coproporphyrinogen-III from 5-aminolevulinate: step 2/4. In terms of biological role, tetrapolymerization of the monopyrrole PBG into the hydroxymethylbilane pre-uroporphyrinogen in several discrete steps. This chain is Probable porphobilinogen deaminase, found in Thermoplasma volcanium (strain ATCC 51530 / DSM 4299 / JCM 9571 / NBRC 15438 / GSS1).